Reading from the N-terminus, the 380-residue chain is Alcohol dehydrogenase 1 (380 aa).

Positions 48, 50, 70, 100, 103, 106, 114, and 178 each coordinate Zn(2+). The an alcohol site is built by Thr50 and His70. Thr50 contacts NAD(+). NAD(+) contacts are provided by residues 203-208 (GLGAVG), Asp227, Arg232, Thr273, Val296, 296-298 (VGV), and Arg373.

The protein belongs to the zinc-containing alcohol dehydrogenase family. As to quaternary structure, homodimer. Zn(2+) serves as cofactor.

The protein resides in the cytoplasm. It carries out the reaction a primary alcohol + NAD(+) = an aldehyde + NADH + H(+). The catalysed reaction is a secondary alcohol + NAD(+) = a ketone + NADH + H(+). This chain is Alcohol dehydrogenase 1 (ADH1), found in Trifolium repens (Creeping white clover).